The following is a 253-amino-acid chain: Tropomyosin-1 (253 aa).

Residues 7–253 (VNKLVRLQGK…MDDVGDDDTQ (247 aa)) are a coiled coil.

The protein belongs to the tropomyosin family. In terms of assembly, homodimer.

In terms of biological role, tropomyosin, in association with the troponin complex, plays a central role in the calcium dependent regulation of muscle contraction. In Hydra vulgaris (Hydra), this protein is Tropomyosin-1 (TROP1).